The following is a 424-amino-acid chain: tRNA modification GTPase MnmE (424 aa).

Residues Arg-20, Glu-77, and Arg-117 each contribute to the (6S)-5-formyl-5,6,7,8-tetrahydrofolate site. Residues 212 to 351 enclose the TrmE-type G domain; it reads GVRVVFAGPP…LVRDLRDAAR (140 aa). Residue Asn-222 coordinates K(+). GTP-binding positions include 222 to 227, 241 to 247, and 266 to 269; these read NAGKST, SPIAGTT, and DTAG. Position 226 (Ser-226) interacts with Mg(2+). K(+) contacts are provided by Ser-241, Ile-243, and Thr-246. A Mg(2+)-binding site is contributed by Thr-247. Lys-424 is a binding site for (6S)-5-formyl-5,6,7,8-tetrahydrofolate.

It belongs to the TRAFAC class TrmE-Era-EngA-EngB-Septin-like GTPase superfamily. TrmE GTPase family. As to quaternary structure, homodimer. Heterotetramer of two MnmE and two MnmG subunits. It depends on K(+) as a cofactor.

The protein localises to the cytoplasm. In terms of biological role, exhibits a very high intrinsic GTPase hydrolysis rate. Involved in the addition of a carboxymethylaminomethyl (cmnm) group at the wobble position (U34) of certain tRNAs, forming tRNA-cmnm(5)s(2)U34. The sequence is that of tRNA modification GTPase MnmE from Erythrobacter litoralis (strain HTCC2594).